Reading from the N-terminus, the 642-residue chain is Eukaryotic translation initiation factor 2A (642 aa).

WD repeat units lie at residues 69-115 (MKLS…KKDC), 186-224 (TYLI…ITKK), 289-331 (LTTG…HSLP), and 374-419 (FDAT…VFVK). Residues 485–593 (ISQHPSREAS…KETSPEEKKI (109 aa)) form a disordered region. Composition is skewed to low complexity over residues 493-507 (ASSN…AGGA) and 563-583 (TSPD…PTNN). Phosphoserine occurs at positions 564, 567, and 572.

This sequence belongs to the WD repeat EIF2A family. In terms of processing, ubiquitinated, probably leading to its degradation. May explain why it has a short half-life of 17 minutes.

Its function is as follows. Functions in the early steps of protein synthesis of a small number of specific mRNAs. Acts by directing the binding of methionyl-tRNAi to 40S ribosomal subunits. In contrast to the eIF-2 complex, it binds methionyl-tRNAi to 40S subunits in a codon-dependent manner, whereas the eIF-2 complex binds methionyl-tRNAi to 40S subunits in a GTP-dependent manner. Specifically associates with both 40S subunits and 80S ribosomes. The protein is Eukaryotic translation initiation factor 2A of Saccharomyces cerevisiae (strain ATCC 204508 / S288c) (Baker's yeast).